The primary structure comprises 396 residues: Probable sugar efflux transporter (396 aa).

Transmembrane regions (helical) follow at residues 15–35, 50–70, 81–101, 103–123, 136–156, 169–189, 209–229, 246–266, 275–295, 301–321, 333–353, and 364–384; these read VVTL…PVGL, VGIM…PFML, LICL…AWNF, VLVI…SITA, AQAL…GLPI, TFFA…KLLP, PALM…YTAY, FATV…LVFG, SLVS…LPAA, LAIL…GMQV, VAMA…ALVG, and AIGY…VLIF.

The protein belongs to the major facilitator superfamily. SotB (TC 2.A.1.2) family.

The protein resides in the cell inner membrane. In terms of biological role, involved in the efflux of sugars. The physiological role may be the reduction of the intracellular concentration of toxic sugars or sugar metabolites. This Salmonella agona (strain SL483) protein is Probable sugar efflux transporter.